The following is a 256-amino-acid chain: Nickel import ATP-binding protein NikD (256 aa).

The 240-residue stretch at 6 to 245 (LEIRGLRIET…PASATARTLL (240 aa)) folds into the ABC transporter domain. 38–45 (GASGSGKS) is an ATP binding site.

This sequence belongs to the ABC transporter superfamily. Nickel importer (TC 3.A.1.5.3) family. The complex is composed of two ATP-binding proteins (NikD and NikE), two transmembrane proteins (NikB and NikC) and a solute-binding protein (NikA).

It is found in the cell inner membrane. The enzyme catalyses Ni(2+)(out) + ATP + H2O = Ni(2+)(in) + ADP + phosphate + H(+). In terms of biological role, part of the ABC transporter complex NikABCDE involved in nickel import. Responsible for energy coupling to the transport system. The chain is Nickel import ATP-binding protein NikD from Pseudomonas putida (strain ATCC 47054 / DSM 6125 / CFBP 8728 / NCIMB 11950 / KT2440).